The sequence spans 423 residues: MARKKIREYDSKRLVKEHFKRLSGKELPIRSVQINETTDLNELVEKEPWLSSEKLVVKPDMLFGKRGKSGLVALKLDFADVATFVKERLGKEVEMSGCKGPITTFIVEPFVPHNEEYYLNVVSDRLGCSISFSECGGIEIEENWDKVKTIFLPTGASLTPEICAPLVATLPLEIKAEIEEFIKVIFTLFQDLDFTFLEMNPFTLVDGSPYPLDMRGELDDTAAFKNFKKWGDIEFPLPFGRVMSPTESFIHGLDEKTSASLKFTVLNPKGRIWTMVAGGGASVIYADTVGDLGYASELGNYAEYSGAPKEDEVLQYARVVIDCATANPDGKSRALVIGGGIANFTDVAATFNGIIRALKEKEAKLKAARMHIFVRRGGPNYQKGLAKMRALGDDIGVPIEVYGPEATMTGICKEAIQYITAAA.

The citrate site is built by N343, T345, and R376.

This sequence belongs to the succinate/malate CoA ligase beta subunit family. As to quaternary structure, heterooctamer of 4 alpha and 4 beta chains. As to expression, expressed in trichomes, epidermal leaf cells, anther tapetal cells, stigma and in young vascular bundles of expanding leaves, cotyledons, roots, pedicel of flowers and siliques.

Its subcellular location is the cytoplasm. It localises to the cytosol. It carries out the reaction oxaloacetate + acetyl-CoA + ADP + phosphate = citrate + ATP + CoA. In terms of biological role, ATP citrate-lyase is the primary enzyme responsible for the synthesis of cytosolic acetyl-CoA, used for the elongation of fatty acids and biosynthesis of isoprenoids, flavonoids and malonated derivatives. May supply substrate to the cytosolic acetyl-CoA carboxylase, which generates the malonyl-CoA used for the synthesis of a multitude of compounds, including very long chain fatty acids and flavonoids. Required for normal growth and development and elongation of C18 fatty acids to C20 to C24 fatty acids in seeds. In contrast to all known animal ACL enzymes having a homomeric structure, plant ACLs are composed of alpha and beta chains. This is ATP-citrate synthase alpha chain protein 1 (ACLA-1) from Arabidopsis thaliana (Mouse-ear cress).